A 341-amino-acid chain; its full sequence is NADH-quinone oxidoreductase subunit 8 (341 aa).

8 consecutive transmembrane segments (helical) span residues 9 to 29 (ALIAFLIINAMLLTASVLVYA), 75 to 95 (FIHALAPTIMVTIAMTVPALI), 108 to 128 (VGVLAILALTSISVYGITLAG), 154 to 174 (MGTAVLSVILQAGSLNVSAIV), 180 to 200 (GWAILGWHVFTNPIGALIFIV), 244 to 264 (LFVASFVIATLFFGGYLVPFE), 278 to 298 (VLLGLLQFLSLLAKTCFFAFL), and 321 to 341 (YLLPIGLANVILIALGVALFS).

The protein belongs to the complex I subunit 1 family. In terms of assembly, NDH-1 is composed of 14 different subunits. Subunits Nqo7-14 constitute the membrane sector of the complex.

The protein resides in the cell inner membrane. It catalyses the reaction a quinone + NADH + 5 H(+)(in) = a quinol + NAD(+) + 4 H(+)(out). In terms of biological role, NDH-1 shuttles electrons from NADH, via FMN and iron-sulfur (Fe-S) centers, to quinones in the respiratory chain. The immediate electron acceptor for the enzyme in this species is believed to be menaquinone. Couples the redox reaction to proton translocation (for every two electrons transferred, four hydrogen ions are translocated across the cytoplasmic membrane), and thus conserves the redox energy in a proton gradient. The protein is NADH-quinone oxidoreductase subunit 8 (nqo8) of Rhodothermus marinus (Rhodothermus obamensis).